A 220-amino-acid polypeptide reads, in one-letter code: tRNA (guanine-N(7)-)-methyltransferase (220 aa).

Positions 44, 69, 96, and 118 each coordinate S-adenosyl-L-methionine. The active site involves Asp-118. A substrate-binding site is contributed by Lys-122. The segment at 124–129 (RHEKRR) is interaction with RNA. Residues Asp-154 and 191–194 (TEYE) contribute to the substrate site.

It belongs to the class I-like SAM-binding methyltransferase superfamily. TrmB family.

It catalyses the reaction guanosine(46) in tRNA + S-adenosyl-L-methionine = N(7)-methylguanosine(46) in tRNA + S-adenosyl-L-homocysteine. It functions in the pathway tRNA modification; N(7)-methylguanine-tRNA biosynthesis. Catalyzes the formation of N(7)-methylguanine at position 46 (m7G46) in tRNA. The protein is tRNA (guanine-N(7)-)-methyltransferase of Halalkalibacterium halodurans (strain ATCC BAA-125 / DSM 18197 / FERM 7344 / JCM 9153 / C-125) (Bacillus halodurans).